Consider the following 640-residue polypeptide: ATP-dependent rRNA helicase spb4 (640 aa).

The short motif at 14-42 is the Q motif element; it reads WDAVTPALSEWVLEAMSSMGFTRMTPVQA. Positions 45–249 constitute a Helicase ATP-binding domain; it reads IPLFMAHKDV…RVGLRNPVKV (205 aa). 58-65 is an ATP binding site; sequence AVTGSGKT. Residues 197–200 carry the DEAD box motif; the sequence is DEAD. In terms of domain architecture, Helicase C-terminal spans 283-437; sequence ALKRIVSSVQ…SISFSDADAA (155 aa). Positions 521–629 form a coiled coil; the sequence is AYKDKQREKR…VAKAAGAKAD (109 aa). Disordered stretches follow at residues 531–593 and 607–640; these read RKEL…EEEK and RKKN…QGFD. The span at 577-593 shows a compositional bias: basic and acidic residues; sequence KSKQEKARWEKMTEEEK. Residues 630–640 show a composition bias toward acidic residues; it reads GDDEEEFQGFD.

The protein belongs to the DEAD box helicase family. DDX55/SPB4 subfamily. Component of pre-60S ribosomal complexes.

It localises to the nucleus. The protein resides in the nucleolus. The enzyme catalyses ATP + H2O = ADP + phosphate + H(+). Functionally, ATP-binding RNA helicase involved in the biogenesis of 60S ribosomal subunits. Binds 90S pre-ribosomal particles and dissociates from pre-60S ribosomal particles after processing of 27SB pre-rRNA. Required for the normal formation of 18S rRNA through the processing of pre-rRNAs at sites A0, A1 and A2, and the normal formation of 25S and 5.8S rRNAs through the processing of pre-rRNAs at sites C1 and C2. This is ATP-dependent rRNA helicase spb4 from Aspergillus fumigatus (strain ATCC MYA-4609 / CBS 101355 / FGSC A1100 / Af293) (Neosartorya fumigata).